A 232-amino-acid chain; its full sequence is Dof zinc finger protein DOF4.3 (232 aa).

The Dof-type zinc-finger motif lies at 25-79; that stretch reads RVCARCDSDNTKFCYYNNYSEFQPRYFCKNCRRYWTHGGALRNVPIGGSSRAKRT. The Zn(2+) site is built by Cys-27, Cys-30, Cys-52, and Cys-55.

The protein localises to the nucleus. Its function is as follows. Transcription factor that binds specifically to a 5'-AA[AG]G-3' consensus core sequence. This chain is Dof zinc finger protein DOF4.3 (DOF4.3), found in Arabidopsis thaliana (Mouse-ear cress).